Consider the following 378-residue polypeptide: Decaprenyl-diphosphate synthase subunit 1 (378 aa).

The isopentenyl diphosphate site is built by Lys-72, Arg-75, and His-130. The Mg(2+) site is built by Asp-137 and Asp-141. Arg-147 serves as a coordination point for isopentenyl diphosphate.

Belongs to the FPP/GGPP synthase family. Heterotetramer of 2 dps1 and 2 dlp1 subunits. Mg(2+) serves as cofactor.

The protein resides in the mitochondrion. It carries out the reaction 7 isopentenyl diphosphate + (2E,6E)-farnesyl diphosphate = all-trans-decaprenyl diphosphate + 7 diphosphate. It functions in the pathway cofactor biosynthesis; ubiquinone biosynthesis. In terms of biological role, supplies decaprenyl diphosphate, the precursor for the side chain of the isoprenoid quinones ubiquinone-10. In Schizosaccharomyces pombe (strain 972 / ATCC 24843) (Fission yeast), this protein is Decaprenyl-diphosphate synthase subunit 1 (dps1).